A 348-amino-acid chain; its full sequence is Myricetin O-methyltransferase (348 aa).

The residue at position 1 (methionine 1) is an N-acetylmethionine. S-adenosyl-L-methionine-binding residues include glycine 189, aspartate 212, aspartate 232, methionine 233, and lysine 246. Histidine 250 serves as the catalytic Proton acceptor.

The N-terminus is blocked.

The catalysed reaction is S-adenosyl-L-methionine + a 3'-hydroxyflavonoid = S-adenosyl-L-homocysteine + a 3'-methoxyflavonoid.. It carries out the reaction S-adenosyl-L-methionine + a 5'-hydroxy-3'-methoxyflavonoid = S-adenosyl-L-homocysteine + a 3',5'-dimethoxyflavonoid.. Methylates myricetin and dihydromyricetin at 2 sites. Inactive towards 16-hydroxytabersonine, the phenylpropanoids 5-hydroxyferulate, caffeate and their CoA-esters, flavones and flavanones possessing 2 or 3 B-ring hydroxyl groups. The chain is Myricetin O-methyltransferase from Catharanthus roseus (Madagascar periwinkle).